A 280-amino-acid polypeptide reads, in one-letter code: Ribosomal RNA small subunit methyltransferase A (280 aa).

Asn-28, Leu-30, Gly-55, Glu-77, Asp-103, and Asn-122 together coordinate S-adenosyl-L-methionine.

Belongs to the class I-like SAM-binding methyltransferase superfamily. rRNA adenine N(6)-methyltransferase family. RsmA subfamily.

The protein localises to the cytoplasm. The catalysed reaction is adenosine(1518)/adenosine(1519) in 16S rRNA + 4 S-adenosyl-L-methionine = N(6)-dimethyladenosine(1518)/N(6)-dimethyladenosine(1519) in 16S rRNA + 4 S-adenosyl-L-homocysteine + 4 H(+). Its function is as follows. Specifically dimethylates two adjacent adenosines (A1518 and A1519) in the loop of a conserved hairpin near the 3'-end of 16S rRNA in the 30S particle. May play a critical role in biogenesis of 30S subunits. The protein is Ribosomal RNA small subunit methyltransferase A of Dinoroseobacter shibae (strain DSM 16493 / NCIMB 14021 / DFL 12).